A 201-amino-acid chain; its full sequence is Molybdenum cofactor guanylyltransferase (201 aa).

GTP contacts are provided by residues 15–17, K28, D74, and D104; that span reads LAG. D104 provides a ligand contact to Mg(2+).

This sequence belongs to the MobA family. As to quaternary structure, monomer. It depends on Mg(2+) as a cofactor.

It localises to the cytoplasm. It carries out the reaction Mo-molybdopterin + GTP + H(+) = Mo-molybdopterin guanine dinucleotide + diphosphate. Its function is as follows. Transfers a GMP moiety from GTP to Mo-molybdopterin (Mo-MPT) cofactor (Moco or molybdenum cofactor) to form Mo-molybdopterin guanine dinucleotide (Mo-MGD) cofactor. This Pseudomonas syringae pv. syringae (strain B728a) protein is Molybdenum cofactor guanylyltransferase.